Here is a 170-residue protein sequence, read N- to C-terminus: Lipoprotein signal peptidase (170 aa).

Helical transmembrane passes span 13-33 (IFIS…VTYV), 72-92 (LFFL…SLKE), 96-113 (VSRF…GNII), 116-136 (LFRP…IFGL), and 142-162 (FNFA…YDLF). Residues D124 and D146 contribute to the active site.

It belongs to the peptidase A8 family.

It localises to the cell inner membrane. The catalysed reaction is Release of signal peptides from bacterial membrane prolipoproteins. Hydrolyzes -Xaa-Yaa-Zaa-|-(S,diacylglyceryl)Cys-, in which Xaa is hydrophobic (preferably Leu), and Yaa (Ala or Ser) and Zaa (Gly or Ala) have small, neutral side chains.. Its pathway is protein modification; lipoprotein biosynthesis (signal peptide cleavage). This protein specifically catalyzes the removal of signal peptides from prolipoproteins. The chain is Lipoprotein signal peptidase from Borrelia duttonii (strain Ly).